A 565-amino-acid chain; its full sequence is MPAGTKEQIECPLKGVTLLNSPRYNKDTAFTPEERQKFEISSRLPPIVETLQQQVDRCYDQYKAIGDEPLQKNLYLSQLSVTNQTLFYALISQHLIEMIPIIYTPTEGDAIKQFSDIYRYPEGCYLDIDHNDLSYIKQQLSEFGKSDSVEYIIITDSEGILGIGDQGVGGVLISVAKGHLMTLCAGLDPNRFLPIVLDVGTNNETHRKNHQYMGLRKDRVRGEQYDSFLDNVIKAIREVFPEAFIHFEDFGLANAKRILDHYRPDIACFNDDIQGTGAVALAAIIGALHVTKSPLTEQRIMIFGAGTAGVGIANQIVAGMVTDGLSLDKARGNLFMIDRCGLLLERHAKIATDGQKPFLKKDSDFKEVPSGDINLESAIALVKPTILLGCSGQPGKFTEKAIREMSKHVERPIIFPISNPTTLMEAKPDQIDKWSDGKALIATGSPLPPLNRNGKKYVISQCNNALLYPALGVACVLSRCKLLSDGMLKAASDALATVPRSLFAADEALLPDLNNAREISRHIVFAVLKQAVSEGMSTVDLPKDDAKLKEWIIEREWNPEYKPFV.

Tyr103 functions as the Proton donor in the catalytic mechanism. Lys177 acts as the Proton acceptor in catalysis. 3 residues coordinate a divalent metal cation: Glu248, Asp249, and Asp272. Residues Asp272 and Asn419 each coordinate NAD(+). Ser445 bears the Phosphoserine mark.

This sequence belongs to the malic enzymes family. Mg(2+) serves as cofactor. Mn(2+) is required as a cofactor.

It carries out the reaction (S)-malate + NAD(+) = pyruvate + CO2 + NADH. The enzyme catalyses oxaloacetate + H(+) = pyruvate + CO2. In Schizosaccharomyces pombe (strain 972 / ATCC 24843) (Fission yeast), this protein is NAD-dependent malic enzyme (mae2).